Consider the following 101-residue polypeptide: Feather keratin Cos1-1/Cos1-3/Cos2-1 (101 aa).

At Ser-2 the chain carries N-acetylserine.

The protein belongs to the avian keratin family. The avian keratins (F-ker, S-ker, C-ker and B-ker) are a complex mixture of very similar polypeptides.

The protein is Feather keratin Cos1-1/Cos1-3/Cos2-1 of Columba livia (Rock dove).